The chain runs to 677 residues: Electrogenic aspartate/glutamate antiporter SLC25A12, mitochondrial (677 aa).

Position 2 is an N-acetylalanine (A2). The regulatory N-terminal domain stretch occupies residues 2–294; the sequence is AVKVHTTKRG…TLADIERIAP (293 aa). Residues 2–329 lie on the Mitochondrial intermembrane side of the membrane; that stretch reads AVKVHTTKRG…WLQIAESAYR (328 aa). EF-hand domains are found at residues 40 to 85, 86 to 121, 122 to 156, and 157 to 192; these read VQRY…SVLC, APDSMFIVAFQLFDKSGNGEVTFENVKEIFGQTIIH, HHIPFNWDCEFIRLHFGHNRKKHLNYVEFTQFLQE, and LQLEHARQAFALKDKSKSGMISGLDFSDVMVTIRSH. Ca(2+) contacts are provided by D65, T67, D69, L71, and E76. The linker loop domain stretch occupies residues 295-310; that stretch reads LAEGALPYNLAELQRQ. The segment at 320–612 is carrier domain; the sequence is WLQIAESAYR…RWFYIDFGGL (293 aa). 3 Solcar repeats span residues 324–416, 424–508, and 516–604; these read AESA…VRDK, IPLP…CKLL, and VGGI…LQRW. The chain crosses the membrane as a helical span at residues 330 to 347; sequence FTLGSVAGAVGATAVYPI. The Mitochondrial matrix portion of the chain corresponds to 348–390; that stretch reads DLVKTRMQNQRGTGSVVGELMYKNSFDCFKKVLRYEGFFGLYR. Residues 391–410 form a helical membrane-spanning segment; it reads GLIPQLIGVAPEKAIKLTVN. Over 411 to 433 the chain is Mitochondrial intermembrane; that stretch reads DFVRDKFTKRDGSIPLPAEILAG. The helical transmembrane segment at 434–447 threads the bilayer; the sequence is GCAGGSQVIFTNPL. Over 448 to 482 the chain is Mitochondrial matrix; it reads EIVKIRLQVAGEITTGPRVSALNVLQDLGLFGLYK. Residues 483 to 502 traverse the membrane as a helical segment; sequence GAKACFLRDIPFSAIYFPVY. At 503-521 the chain is on the mitochondrial intermembrane side; it reads AHCKLLLADENGRVGGINL. Residues 522 to 539 form a helical membrane-spanning segment; the sequence is LTAGALAGVPAASLVTPA. Over 540 to 578 the chain is Mitochondrial matrix; the sequence is DVIKTRLQVAARAGQTTYSGVVDCFRKILREEGPSAFWK. The helical transmembrane segment at 579 to 598 threads the bilayer; that stretch reads GTAARVFRSSPQFGVTLVTY. Topologically, residues 599–677 are mitochondrial intermembrane; it reads ELLQRWFYID…AQPKAAAAAQ (79 aa). The segment at 613 to 677 is C-terminal domain; the sequence is KPSGSEPTPK…AQPKAAAAAQ (65 aa).

The protein belongs to the mitochondrial carrier (TC 2.A.29) family. As to quaternary structure, homodimer (via N-terminus).

The protein localises to the mitochondrion inner membrane. The enzyme catalyses L-aspartate(in) + L-glutamate(out) + H(+)(out) = L-aspartate(out) + L-glutamate(in) + H(+)(in). It catalyses the reaction 3-sulfino-L-alanine(out) + L-glutamate(in) + H(+)(in) = 3-sulfino-L-alanine(in) + L-glutamate(out) + H(+)(out). The catalysed reaction is 3-sulfino-L-alanine(out) + L-aspartate(in) = 3-sulfino-L-alanine(in) + L-aspartate(out). Mitochondrial electrogenic aspartate/glutamate antiporter that favors efflux of aspartate and entry of glutamate and proton within the mitochondria as part of the malate-aspartate shuttle. Also mediates the uptake of L-cysteinesulfinate (3-sulfino-L-alanine) by mitochondria in exchange of L-glutamate and proton. Can also exchange L-cysteinesulfinate with aspartate in their anionic form without any proton translocation. Lacks transport activity towards L-glutamine or gamma-aminobutyric acid (GABA). This Mus musculus (Mouse) protein is Electrogenic aspartate/glutamate antiporter SLC25A12, mitochondrial.